A 145-amino-acid chain; its full sequence is Fatty acid-binding protein homolog 4 (145 aa).

Belongs to the calycin superfamily. Fatty-acid binding protein (FABP) family.

This Caenorhabditis elegans protein is Fatty acid-binding protein homolog 4 (lbp-4).